The primary structure comprises 202 residues: Holliday junction branch migration complex subunit RuvA (202 aa).

The segment at 1-64 (MFAYIRGRLE…EDVISLYGFL (64 aa)) is domain I. The interval 65–143 (TQEELNVFEL…KEQLTEYAQS (79 aa)) is domain II. Residues 144–152 (EEGGKVLDT) form a flexible linker region. The interval 152 to 202 (TDSSKMAEAVSALMVLGYSPAEANKAVSAVYREDMDIETIIKNALKGLARP) is domain III.

Belongs to the RuvA family. In terms of assembly, homotetramer. Forms an RuvA(8)-RuvB(12)-Holliday junction (HJ) complex. HJ DNA is sandwiched between 2 RuvA tetramers; dsDNA enters through RuvA and exits via RuvB. An RuvB hexamer assembles on each DNA strand where it exits the tetramer. Each RuvB hexamer is contacted by two RuvA subunits (via domain III) on 2 adjacent RuvB subunits; this complex drives branch migration. In the full resolvosome a probable DNA-RuvA(4)-RuvB(12)-RuvC(2) complex forms which resolves the HJ.

Its subcellular location is the cytoplasm. Its function is as follows. The RuvA-RuvB-RuvC complex processes Holliday junction (HJ) DNA during genetic recombination and DNA repair, while the RuvA-RuvB complex plays an important role in the rescue of blocked DNA replication forks via replication fork reversal (RFR). RuvA specifically binds to HJ cruciform DNA, conferring on it an open structure. The RuvB hexamer acts as an ATP-dependent pump, pulling dsDNA into and through the RuvAB complex. HJ branch migration allows RuvC to scan DNA until it finds its consensus sequence, where it cleaves and resolves the cruciform DNA. This chain is Holliday junction branch migration complex subunit RuvA, found in Acetivibrio thermocellus (strain ATCC 27405 / DSM 1237 / JCM 9322 / NBRC 103400 / NCIMB 10682 / NRRL B-4536 / VPI 7372) (Clostridium thermocellum).